A 274-amino-acid polypeptide reads, in one-letter code: N-acetylmuramic acid 6-phosphate etherase (274 aa).

In terms of domain architecture, SIS spans 54-217 (IIPRIDSGGR…STSVMIKLGR (164 aa)). The Proton donor role is filled by Glu82. Residue Glu113 is part of the active site.

Belongs to the GCKR-like family. MurNAc-6-P etherase subfamily. In terms of assembly, homodimer.

The enzyme catalyses N-acetyl-D-muramate 6-phosphate + H2O = N-acetyl-D-glucosamine 6-phosphate + (R)-lactate. It participates in amino-sugar metabolism; N-acetylmuramate degradation. Specifically catalyzes the cleavage of the D-lactyl ether substituent of MurNAc 6-phosphate, producing GlcNAc 6-phosphate and D-lactate. This Christiangramia forsetii (strain DSM 17595 / CGMCC 1.15422 / KT0803) (Gramella forsetii) protein is N-acetylmuramic acid 6-phosphate etherase.